A 236-amino-acid polypeptide reads, in one-letter code: NAD-dependent protein deacetylase (236 aa).

Residues 1-236 (MIKDWLQESN…EFLRSISNEG (236 aa)) enclose the Deacetylase sirtuin-type domain. NAD(+)-binding residues include alanine 18, threonine 22, phenylalanine 29, arginine 30, glutamine 96, valine 98, aspartate 99, and histidine 114. Residue phenylalanine 29 participates in nicotinamide binding. 2 residues coordinate nicotinamide: valine 98 and aspartate 99. Residue histidine 114 is the Proton acceptor of the active site. Zn(2+) contacts are provided by cysteine 122, cysteine 125, cysteine 141, and cysteine 143. NAD(+) is bound by residues serine 181, serine 182, asparagine 206, and isoleucine 225.

The protein belongs to the sirtuin family. Class U subfamily. Zn(2+) serves as cofactor.

It localises to the cytoplasm. It catalyses the reaction N(6)-acetyl-L-lysyl-[protein] + NAD(+) + H2O = 2''-O-acetyl-ADP-D-ribose + nicotinamide + L-lysyl-[protein]. NAD-dependent protein deacetylase which modulates the activities of several enzymes which are inactive in their acetylated form. In Oceanobacillus iheyensis (strain DSM 14371 / CIP 107618 / JCM 11309 / KCTC 3954 / HTE831), this protein is NAD-dependent protein deacetylase.